Reading from the N-terminus, the 71-residue chain is Large ribosomal subunit protein uL29 (71 aa).

The interval 1–20 is disordered; it reads MKARELQELRQGSSPQDLQE.

Belongs to the universal ribosomal protein uL29 family.

The chain is Large ribosomal subunit protein uL29 from Clostridium kluyveri (strain ATCC 8527 / DSM 555 / NBRC 12016 / NCIMB 10680 / K1).